The primary structure comprises 537 residues: Mitochondria-eating protein (537 aa).

The interaction with YWHAG/14-3-3 protein gamma stretch occupies residues 1–270 (MAESLKKLAK…SHSRSRSHSR (270 aa)). Ser-13, Ser-85, Ser-123, Ser-127, Ser-154, and Ser-157 each carry phosphoserine. Positions 109–150 (SKNRDNSPDQDQHQSDNESFSETQPTQVQDDLAESGKSLEGA) are disordered. Residues 110–124 (KNRDNSPDQDQHQSD) show a composition bias toward basic and acidic residues. Residues 125 to 137 (NESFSETQPTQVQ) show a composition bias toward polar residues. Coiled coils occupy residues 152 to 184 (NGSTISLLAAEEEINQLKKQLKSLQAQEDARHK) and 210 to 243 (QDVVSNYEKHLQNLKEEIAVLSAEKSGLQGRSAR). 2 disordered regions span residues 171-212 (QLKS…PQDV) and 233-291 (EKSG…RAKM). Positions 179 to 209 (EDARHKTSENRRSEALKSDHRSTKRTQDQRP) are enriched in basic and acidic residues. Over residues 239–251 (GRSARSPSPSTGT) the composition is skewed to low complexity. Basic residues predominate over residues 252-269 (RSHRRGRSRSHSRSRSHS). A phosphoserine mark is found at Ser-283, Ser-285, and Ser-508.

This sequence belongs to the MIEAP family. In terms of assembly, interacts (via coiled-coil domains) with BNIP3L (via BH3 domain). Interacts (via coiled-coil domains) with BNIP3 (via BH3 domain). Interacts with YWHAG/14-3-3 protein gamma; a protein that also plays a role in MALM. As to expression, in testis, expressed primarily in spermatids.

The protein localises to the cytoplasm. The protein resides in the cytosol. Its subcellular location is the mitochondrion outer membrane. It is found in the mitochondrion matrix. Key regulator of mitochondrial quality that mediates the repairing or degradation of unhealthy mitochondria in response to mitochondrial damage. Mediator of mitochondrial protein catabolic process (also named MALM) by mediating the degradation of damaged proteins inside mitochondria by promoting the accumulation in the mitochondrial matrix of hydrolases that are characteristic of the lysosomal lumen. Also involved in mitochondrion degradation of damaged mitochondria by promoting the formation of vacuole-like structures (named MIV), which engulf and degrade unhealthy mitochondria by accumulating lysosomes. The physical interaction of SPATA18/MIEAP, BNIP3 and BNIP3L/NIX at the mitochondrial outer membrane regulates the opening of a pore in the mitochondrial double membrane in order to mediate the translocation of lysosomal proteins from the cytoplasm to the mitochondrial matrix. Binds cardiolipin. May form molecular condensates (non-membrane-bounded organelles) within mitochondria that compartmentalize and promote cardiolipin metabolism. The protein is Mitochondria-eating protein (Spata18) of Mus musculus (Mouse).